The sequence spans 468 residues: FAD-linked oxidoreductase azaG (468 aa).

Residues 1–16 form the signal peptide; it reads MQLSGILSWLLSWLWA. N44 carries an N-linked (GlcNAc...) asparagine glycan. Positions 54–228 constitute an FAD-binding PCMH-type domain; the sequence is TVHGAPHYLG…TSATYRTHQA (175 aa). N-linked (GlcNAc...) asparagine glycosylation is found at N272, N348, and N464.

The protein belongs to the oxygen-dependent FAD-linked oxidoreductase family. FAD serves as cofactor.

The protein operates within secondary metabolite biosynthesis. Functionally, FAD-linked oxidoreductase; part of the gene cluster that mediates the biosynthesis of azaphilones, a class of fungal metabolites characterized by a highly oxygenated pyrano-quinone bicyclic core and exhibiting a broad range of bioactivities. In the first step, the non-reducing polyketide synthase azaA forms the hexaketide precursor from successive condensations of five malonyl-CoA units, presumably with a simple acetyl-CoA starter unit. The reactive polyketide chain then undergoes a PT-mediated C2-C7 cyclization to afford the aromatic ring and is eventually released as an aldehyde through the R-domain. The putative ketoreductase azaE is proposed to catalyze the reduction of the terminal ketone resulting in the early culture product FK17-P2a. The monooxygenase azaH was demonstrated to be the only enzyme required to convert FK17-P2a to azanigerone E. AzaH first hydroxylates the benzaldehyde intermediate FK17-P2a at C4, which triggers the formation of the pyran-ring to afford azanigerone E. In parallel, the 2,4-dimethylhexanoyl chain is synthesized by the HR-PKS azaB and is proposed to be transferred to the C4-hydroxyl of azanigerone E by the acyltransferase azaD directly from the ACP domain of azaB. Alternatively, the 2,4-dimethyl-hexanoyl chain may be offloaded from the HR-PKS as a carboxylic acid and converted to an acyl-CoA by azaF. The resulting acyl-CoA molecule could then be taken up as a substrate by AzaD to form azanigerone B. To yield the carboxylic acid substituent in azanigerone A, the hydroxypropyl side chain of azanigerone B would need to undergo a C-C oxidative cleavage catalyzed by cytochrome P450 AzaI. AzaI is proposed to act on a vicinal diol that leads to a C-C bond scission either through an alkoxyradical intermediate or a peroxy complex. In the biosynthesis of azanigerone A, azanigerone B first undergoes hydroxylation at C10, possibly catalyzed by one of the two FAD-dependent monooxygenases encoded in the cluster, azaG or azaL, resulting in the vicinal diol azanigerone C. Oxidative cleavage of azanigerone C by azaI would yield the corresponding aldehyde derivative of azanigerone A. Finally, the dehydrogenase azaJ is proposed to convert the aldehyde functional group into the carboxylic acid, completing the conversion from azanigerone B to azanigerone A. Alternatively, the oxidation of aldehyde to carboxylic acid may be catalyzed by the same P450 enzyme azaI via consecutive oxidation or by endogenous alcohol dehydrogenase. The protein is FAD-linked oxidoreductase azaG of Aspergillus niger (strain ATCC 1015 / CBS 113.46 / FGSC A1144 / LSHB Ac4 / NCTC 3858a / NRRL 328 / USDA 3528.7).